The chain runs to 416 residues: Choline/ethanolaminephosphotransferase 1 (416 aa).

The interval 1–20 (MSGHRSTRKRCGDSHPESPV) is disordered. S18 is subject to Phosphoserine. Phosphothreonine is present on T40. Residue N86 coordinates CDP-choline. Helical transmembrane passes span 89–108 (TIIGLSINICTTILLVFYCP) and 116–133 (LWAYIACACGLFIYQSLD). D133 provides a ligand contact to Mg(2+). N-linked (GlcNAc...) asparagine glycosylation occurs at N144. E151 provides a ligand contact to CDP-choline. Residue D154 participates in Mg(2+) binding. H155 functions as the Proton acceptor in the catalytic mechanism. Transmembrane regions (helical) follow at residues 156–176 (GCDSLSTVFVVLGTCIAVQLG), 180–199 (DWMFFCCFAGTFMFYCAHWQ), 210–230 (IIDVTEVQIFIIIMHLLAVIG), 246–267 (MKIFPALCTVAGTIFSCTNYFR), 286–306 (VLSPFLHIGSVITLAAMIYKK), 315–334 (HPCLYILTFGFVSAKITNKL), 349–363 (TAFIGPALLFLDQYF), and 368–388 (DEYIVLWIALVFSFFDLIRYC). Residue D158 participates in Mg(2+) binding.

Belongs to the CDP-alcohol phosphatidyltransferase class-I family. In terms of assembly, homodimer. It depends on Mg(2+) as a cofactor. The cofactor is Mn(2+). In terms of tissue distribution, ubiquitously expressed.

The protein localises to the endoplasmic reticulum membrane. Its subcellular location is the nucleus membrane. The enzyme catalyses CDP-ethanolamine + a 1,2-diacyl-sn-glycerol = a 1,2-diacyl-sn-glycero-3-phosphoethanolamine + CMP + H(+). It carries out the reaction CDP-choline + a 1,2-diacyl-sn-glycerol = a 1,2-diacyl-sn-glycero-3-phosphocholine + CMP + H(+). It catalyses the reaction 1-O-alkyl-2-acyl-sn-glycerol + CDP-choline = a 1-O-alkyl-2-acyl-sn-glycero-3-phosphocholine + CMP + H(+). The catalysed reaction is a 1-O-(1Z-alkenyl)-2-acyl-sn-glycerol + CDP-choline = a 1-O-(1Z-alkenyl)-2-acyl-sn-glycero-3-phosphocholine + CMP + H(+). The enzyme catalyses 1,2-dioctanoyl-sn-glycerol + CDP-choline = 1,2-dioctanoyl-sn-glycero-3-phosphocholine + CMP + H(+). It carries out the reaction 1,2-didecanoyl-sn-glycerol + CDP-choline = 1,2-didecanoyl-sn-glycero-3-phosphocholine + CMP + H(+). It catalyses the reaction CDP-choline + 1,2-di-(9Z-octadecenoyl)-sn-glycerol = 1,2-di-(9Z-octadecenoyl)-sn-glycero-3-phosphocholine + CMP + H(+). The catalysed reaction is 1-hexadecanoyl-2-(9Z-octadecenoyl)-sn-glycerol + CDP-choline = 1-hexadecanoyl-2-(9Z-octadecenoyl)-sn-glycero-3-phosphocholine + CMP + H(+). The enzyme catalyses CDP-ethanolamine + 1,2-di-(9Z-octadecenoyl)-sn-glycerol = 1,2-di-(9Z-octadecenoyl)-sn-glycero-3-phosphoethanolamine + CMP + H(+). It carries out the reaction 1-hexadecanoyl-2-(9Z-octadecenoyl)-sn-glycerol + CDP-ethanolamine = 1-hexadecanoyl-2-(9Z-octadecenoyl)-sn-glycero-3-phosphoethanolamine + CMP + H(+). It catalyses the reaction 1-hexadecanoyl-2-(4Z,7Z,10Z,13Z,16Z,19Z-docosahexaenoyl)-sn-glycerol + CDP-choline = 1-hexadecanoyl-2-(4Z,7Z,10Z,13Z,16Z,19Z-docosahexaenoyl)-sn-glycero-3-phosphocholine + CMP + H(+). The catalysed reaction is 1,2-di-(9Z-hexadecenoyl)-sn-glycerol + CDP-choline = 1,2-di-(9Z-hexadecenoyl)-sn-glycero-3-phosphocholine + CMP + H(+). The enzyme catalyses 1,2-di-(9Z-hexadecenoyl)-sn-glycerol + CDP-ethanolamine = 1,2-di-(9Z-hexadecenoyl)-sn-glycero-3-phosphoethanolamine + CMP + H(+). It carries out the reaction 1-O-hexadecyl-2-acetyl-sn-glycerol + CDP-choline = 1-O-hexadecyl-2-acetyl-sn-glycero-3-phosphocholine + CMP + H(+). It catalyses the reaction 1-O-hexadecyl-2-(5Z,8Z,11Z,14Z-eicosatetraenoyl)-sn-glycerol + CDP-choline = 1-O-hexadecyl-2-(5Z,8Z,11Z,14Z)-eicosatetraenoyl-sn-glycero-3-phosphocholine + CMP + H(+). The protein operates within phospholipid metabolism; phosphatidylethanolamine biosynthesis; phosphatidylethanolamine from ethanolamine: step 3/3. It participates in phospholipid metabolism; phosphatidylcholine biosynthesis; phosphatidylcholine from phosphocholine: step 2/2. Its function is as follows. Catalyzes both phosphatidylcholine and phosphatidylethanolamine biosynthesis from CDP-choline and CDP-ethanolamine, respectively. Involved in protein-dependent process of phospholipid transport to distribute phosphatidyl choline to the lumenal surface. Has a higher cholinephosphotransferase activity than ethanolaminephosphotransferase activity. The polypeptide is Choline/ethanolaminephosphotransferase 1 (Homo sapiens (Human)).